The following is a 20-amino-acid chain: Glutathione S-transferase 2 (20 aa).

A GST N-terminal domain is found at 1–20 (GYKVTYFAIRGLAEPIXLLL). Tyr-6 lines the glutathione pocket.

It belongs to the GST superfamily. Sigma family.

It catalyses the reaction RX + glutathione = an S-substituted glutathione + a halide anion + H(+). Functionally, conjugation of reduced glutathione to a wide number of exogenous and endogenous hydrophobic electrophiles. This Ascaris suum (Pig roundworm) protein is Glutathione S-transferase 2 (GST2).